The sequence spans 353 residues: Heterogeneous nuclear ribonucleoprotein D0 (353 aa).

The interval 1 to 89 (MSEEQFGGDG…SSPRHTEAAT (89 aa)) is disordered. The residue at position 2 (serine 2) is an N-acetylserine. Over residues 11-42 (AAAAATAAVGGSAGEQEGAMVAAAQGAAAAAG) the composition is skewed to low complexity. Over residues 43–56 (SGSGGGSAPGGTEG) the composition is skewed to gly residues. Basic and acidic residues predominate over residues 62–71 (EGAKIDASKN). Serine 69 carries the post-translational modification Phosphoserine. Lysine 70 is covalently cross-linked (Glycyl lysine isopeptide (Lys-Gly) (interchain with G-Cter in SUMO2)). Serine 78, serine 80, and serine 81 each carry phosphoserine. The residue at position 89 (threonine 89) is a Phosphothreonine. RRM domains are found at residues 95–177 (WKMF…KTKE) and 180–259 (KKIF…MSKE). Lysine 117 bears the N6-methyllysine mark. A Phosphothreonine modification is found at threonine 125. Lysine 127 is covalently cross-linked (Glycyl lysine isopeptide (Lys-Gly) (interchain with G-Cter in SUMO2)). An N6-acetyllysine modification is found at lysine 163. Position 188 is a phosphoserine (serine 188). The residue at position 191 (threonine 191) is a Phosphothreonine. Lysine 195 participates in a covalent cross-link: Glycyl lysine isopeptide (Lys-Gly) (interchain with G-Cter in SUMO2). 2 positions are modified to N6-acetyllysine: lysine 241 and lysine 249. Residue serine 269 is modified to Phosphoserine. Residues arginine 270, arginine 276, arginine 278, and arginine 280 each carry the omega-N-methylarginine modification. Position 343 is an asymmetric dimethylarginine; alternate (arginine 343). Position 343 is a dimethylated arginine; alternate (arginine 343). Residue arginine 343 is modified to Omega-N-methylarginine; alternate.

As to quaternary structure, identified in a IGF2BP1-dependent mRNP granule complex containing untranslated mRNAs. Part of a complex associated with the FOS mCRD domain and consisting of PABPC1, PAIP1, CSDE1/UNR and SYNCRIP. Interacts with IGF2BP2. Interacts with GTPBP1. Interacts with EIF4G1; the interaction requires RNA. Interacts with EIF3B and RPS3. Post-translationally, methylated by PRMT1, in an insulin-dependent manner. The PRMT1-mediated methylation regulates its phosphorylation. Arg-343 is dimethylated, probably to asymmetric dimethylarginine.

The protein resides in the nucleus. Its subcellular location is the cytoplasm. Its function is as follows. Binds with high affinity to RNA molecules that contain AU-rich elements (AREs) found within the 3'-UTR of many proto-oncogenes and cytokine mRNAs. Also binds to double- and single-stranded DNA sequences in a specific manner and functions a transcription factor. Each of the RNA-binding domains specifically can bind solely to a single-stranded non-monotonous 5'-UUAG-3' sequence and also weaker to the single-stranded 5'-TTAGGG-3' telomeric DNA repeat. Binds RNA oligonucleotides with 5'-UUAGGG-3' repeats more tightly than the telomeric single-stranded DNA 5'-TTAGGG-3' repeats. Binding of RRM1 to DNA inhibits the formation of DNA quadruplex structure which may play a role in telomere elongation. May be involved in translationally coupled mRNA turnover. Implicated with other RNA-binding proteins in the cytoplasmic deadenylation/translational and decay interplay of the FOS mRNA mediated by the major coding-region determinant of instability (mCRD) domain. May play a role in the regulation of the rhythmic expression of circadian clock core genes. Directly binds to the 3'UTR of CRY1 mRNA and induces CRY1 rhythmic translation. May also be involved in the regulation of PER2 translation. The sequence is that of Heterogeneous nuclear ribonucleoprotein D0 (Hnrnpd) from Rattus norvegicus (Rat).